The chain runs to 209 residues: Small ribosomal subunit protein uS4 (209 aa).

The segment at arginine 22 to serine 45 is disordered. The S4 RNA-binding domain maps to cysteine 93–glutamate 154.

The protein belongs to the universal ribosomal protein uS4 family. As to quaternary structure, part of the 30S ribosomal subunit. Contacts protein S5. The interaction surface between S4 and S5 is involved in control of translational fidelity.

In terms of biological role, one of the primary rRNA binding proteins, it binds directly to 16S rRNA where it nucleates assembly of the body of the 30S subunit. With S5 and S12 plays an important role in translational accuracy. The polypeptide is Small ribosomal subunit protein uS4 (Chlamydia muridarum (strain MoPn / Nigg)).